Consider the following 630-residue polypeptide: Plastin-1 (630 aa).

The segment at 1–114 (MENNVTTISR…LGGTSSISTE (114 aa)) is fimbrin headpiece. EF-hand domains lie at 11–46 (EELEELREAFNKIDIDNSGYVSDYELQDLFKEASLP) and 51–86 (KVREIIEKIFAVTDSNKDGKINFEEFVSLIQELKSK). Aspartate 24, aspartate 26, serine 28, tyrosine 30, glutamate 35, aspartate 64, asparagine 66, aspartate 68, lysine 70, and glutamate 75 together coordinate Ca(2+). 2 actin-binding regions span residues 108 to 375 (TSSI…LFNT) and 376 to 624 (YPAL…LMGR). The fimbrin core stretch occupies residues 115–630 (GTQHSYSEEE…LMGRGLNKIK (516 aa)). Calponin-homology (CH) domains follow at residues 122 to 238 (EEEK…KVGL), 266 to 377 (LSPE…NTYP), 396 to 505 (SNEE…RRYT), and 517 to 626 (KVND…GRGL).

As to quaternary structure, monomer. Post-translationally, the N-terminus is blocked.

It localises to the cytoplasm. Its subcellular location is the cell projection. The protein resides in the stereocilium. Actin-bundling protein. In the inner ear, it is required for stereocilia formation. Mediates liquid packing of actin filaments that is necessary for stereocilia to grow to their proper dimensions. In Gallus gallus (Chicken), this protein is Plastin-1 (PLS1).